The primary structure comprises 204 residues: Adenylyl-sulfate kinase (204 aa).

An ATP-binding site is contributed by 34 to 41; sequence GLSGSGKS. Catalysis depends on Ser108, which acts as the Phosphoserine intermediate.

The protein belongs to the APS kinase family.

It catalyses the reaction adenosine 5'-phosphosulfate + ATP = 3'-phosphoadenylyl sulfate + ADP + H(+). It participates in sulfur metabolism; hydrogen sulfide biosynthesis; sulfite from sulfate: step 2/3. In terms of biological role, catalyzes the synthesis of activated sulfate. The chain is Adenylyl-sulfate kinase from Phocaeicola vulgatus (strain ATCC 8482 / DSM 1447 / JCM 5826 / CCUG 4940 / NBRC 14291 / NCTC 11154) (Bacteroides vulgatus).